The primary structure comprises 245 residues: Phycocyanobilin:ferredoxin oxidoreductase (245 aa).

The protein belongs to the HY2 family.

It catalyses the reaction (2R,3Z)-phycocyanobilin + 4 oxidized [2Fe-2S]-[ferredoxin] = biliverdin IXalpha + 4 reduced [2Fe-2S]-[ferredoxin] + 4 H(+). Functionally, catalyzes the four-electron reduction of biliverdin IX-alpha (2-electron reduction at both the A and D rings); the reaction proceeds via an isolatable 2-electron intermediate, 181,182-dihydrobiliverdin. The sequence is that of Phycocyanobilin:ferredoxin oxidoreductase from Trichormus variabilis (strain ATCC 29413 / PCC 7937) (Anabaena variabilis).